A 556-amino-acid polypeptide reads, in one-letter code: Portal protein (556 aa).

The tract at residues Ala-527–Gln-556 is disordered. Residues Leu-533 to Ser-542 are compositionally biased toward polar residues.

The protein belongs to the podoviridae head-to-tail connector protein family. Homododecamer.

It is found in the virion. Forms the portal vertex of the capsid. This portal plays critical roles in head assembly, genome packaging, neck/tail attachment, and genome ejection. The portal protein multimerizes as a single ring-shaped homododecamer arranged around a central channel. The protein is Portal protein of Salmonella phage epsilon15.